Here is a 182-residue protein sequence, read N- to C-terminus: ATP-dependent protease subunit HslV (182 aa).

Thr-10 is a catalytic residue. Na(+) contacts are provided by Ala-166, Cys-169, and Ser-172.

It belongs to the peptidase T1B family. HslV subfamily. A double ring-shaped homohexamer of HslV is capped on each side by a ring-shaped HslU homohexamer. The assembly of the HslU/HslV complex is dependent on binding of ATP.

It is found in the cytoplasm. The catalysed reaction is ATP-dependent cleavage of peptide bonds with broad specificity.. With respect to regulation, allosterically activated by HslU binding. Its function is as follows. Protease subunit of a proteasome-like degradation complex believed to be a general protein degrading machinery. The chain is ATP-dependent protease subunit HslV from Rickettsia felis (strain ATCC VR-1525 / URRWXCal2) (Rickettsia azadi).